The sequence spans 114 residues: uncharacterized protein (114 aa).

The next 2 helical transmembrane spans lie at 14 to 34 (VMSA…CFLL) and 75 to 95 (VIII…HPVA).

It localises to the membrane. This is an uncharacterized protein from Homo sapiens (Human).